Consider the following 250-residue polypeptide: Probable transcriptional regulatory protein Nther_1800 (250 aa).

Belongs to the TACO1 family.

The protein localises to the cytoplasm. This Natranaerobius thermophilus (strain ATCC BAA-1301 / DSM 18059 / JW/NM-WN-LF) protein is Probable transcriptional regulatory protein Nther_1800.